The chain runs to 298 residues: 4-hydroxy-tetrahydrodipicolinate synthase (298 aa).

T51 contributes to the pyruvate binding site. Residue Y139 is the Proton donor/acceptor of the active site. K167 functions as the Schiff-base intermediate with substrate in the catalytic mechanism. I209 is a pyruvate binding site.

Belongs to the DapA family. As to quaternary structure, homotetramer; dimer of dimers.

It is found in the cytoplasm. It catalyses the reaction L-aspartate 4-semialdehyde + pyruvate = (2S,4S)-4-hydroxy-2,3,4,5-tetrahydrodipicolinate + H2O + H(+). It functions in the pathway amino-acid biosynthesis; L-lysine biosynthesis via DAP pathway; (S)-tetrahydrodipicolinate from L-aspartate: step 3/4. In terms of biological role, catalyzes the condensation of (S)-aspartate-beta-semialdehyde [(S)-ASA] and pyruvate to 4-hydroxy-tetrahydrodipicolinate (HTPA). This is 4-hydroxy-tetrahydrodipicolinate synthase from Histophilus somni (strain 2336) (Haemophilus somnus).